The primary structure comprises 354 residues: Probable L-ascorbate-6-phosphate lactonase UlaG (354 aa).

It belongs to the UlaG family. Requires a divalent metal cation as cofactor.

The protein resides in the cytoplasm. The catalysed reaction is L-ascorbate 6-phosphate + H2O = 3-dehydro-L-gulonate 6-phosphate. Its pathway is cofactor degradation; L-ascorbate degradation; D-xylulose 5-phosphate from L-ascorbate: step 1/4. Probably catalyzes the hydrolysis of L-ascorbate-6-P into 3-keto-L-gulonate-6-P. Is essential for L-ascorbate utilization under anaerobic conditions. In Escherichia coli O127:H6 (strain E2348/69 / EPEC), this protein is Probable L-ascorbate-6-phosphate lactonase UlaG.